Consider the following 230-residue polypeptide: 2,3-bisphosphoglycerate-dependent phosphoglycerate mutase (230 aa).

Substrate-binding positions include 8–15 (RHGESEWN), 21–22 (TG), R60, 87–90 (ERHY), K98, 114–115 (RR), and 183–184 (GN). Residue H9 is the Tele-phosphohistidine intermediate of the active site. E87 functions as the Proton donor/acceptor in the catalytic mechanism.

The protein belongs to the phosphoglycerate mutase family. BPG-dependent PGAM subfamily.

The enzyme catalyses (2R)-2-phosphoglycerate = (2R)-3-phosphoglycerate. Its pathway is carbohydrate degradation; glycolysis; pyruvate from D-glyceraldehyde 3-phosphate: step 3/5. Catalyzes the interconversion of 2-phosphoglycerate and 3-phosphoglycerate. The polypeptide is 2,3-bisphosphoglycerate-dependent phosphoglycerate mutase (Streptococcus mutans serotype c (strain ATCC 700610 / UA159)).